A 907-amino-acid polypeptide reads, in one-letter code: Translation initiation factor IF-2 (907 aa).

The segment at 26-317 is disordered; the sequence is DAGMKKSSSD…KPKSMQHGFD (292 aa). Composition is skewed to basic and acidic residues over residues 28–44 and 101–248; these read GMKKSSSDQVSDEEKQK and SAIE…DTDY. Basic residues predominate over residues 299 to 308; that stretch reads KGGRKGKLSK. One can recognise a tr-type G domain in the interval 406 to 575; the sequence is PRAPVVTIMG…LLQAEVLELT (170 aa). The G1 stretch occupies residues 415–422; that stretch reads GHVDHGKT. 415-422 contributes to the GTP binding site; it reads GHVDHGKT. The segment at 440 to 444 is G2; that stretch reads GITQH. The interval 461 to 464 is G3; it reads DTPG. GTP is bound by residues 461 to 465 and 515 to 518; these read DTPGH and NKID. The G4 stretch occupies residues 515–518; the sequence is NKID. The G5 stretch occupies residues 551 to 553; that stretch reads SAK.

Belongs to the TRAFAC class translation factor GTPase superfamily. Classic translation factor GTPase family. IF-2 subfamily.

It is found in the cytoplasm. Functionally, one of the essential components for the initiation of protein synthesis. Protects formylmethionyl-tRNA from spontaneous hydrolysis and promotes its binding to the 30S ribosomal subunits. Also involved in the hydrolysis of GTP during the formation of the 70S ribosomal complex. In Vibrio vulnificus (strain YJ016), this protein is Translation initiation factor IF-2.